We begin with the raw amino-acid sequence, 336 residues long: MVMMIIIYTEPEISLFPLQDRSEELSSNVENGSCNSNEGINPETSSHWIENVVKVRKPYTVTKQREKWSEEEHDRFLEAIKLYGRGWRQIQEHIGTKTAVQIRSHAQKFFSKMAQEADSRSEGSVKAIVIPPPRPKRKPAHPYPRKSPVPYTQSPPPNLSAMEKGTKSPTSVLSSFGSEDQNNYTTSKQPFKDDSDIGSTPISSITLFGKIVLVAEESHKPSSYNDDDLKQMTCQENHYSGMLVDTNLSLGVWETFCTGSNAFGSVTEASENLEKSAEPISSSWKRLSSLEKQGSCNPVNASGFRPYKRCLSEREVTSSLTLVASDEKKSQRARIC.

Positions 60 to 114 (TVTKQREKWSEEEHDRFLEAIKLYGRGWRQIQEHIGTKTAVQIRSHAQKFFSKMA) constitute an HTH myb-type domain. The H-T-H motif DNA-binding region spans 87–110 (WRQIQEHIGTKTAVQIRSHAQKFF). Residues 114-197 (AQEADSRSEG…KQPFKDDSDI (84 aa)) form a disordered region. A compositionally biased stretch (basic residues) spans 134 to 144 (RPKRKPAHPYP). The segment covering 145–158 (RKSPVPYTQSPPPN) has biased composition (pro residues). The segment covering 167–189 (KSPTSVLSSFGSEDQNNYTTSKQ) has biased composition (polar residues).

The protein localises to the nucleus. Functionally, probable transcription factor. This Arabidopsis thaliana (Mouse-ear cress) protein is Protein REVEILLE 7-like (RVE7L).